Consider the following 243-residue polypeptide: MVQPRTSKTESPASAPGASAQMDDVVDTLTSLRLTNSALRREASTLRAEKANLTNMLESVMAELTLLRTRARIPGALQITPPISAITSNGTRPMTTPPTSLPEPFSGDPGQLAGFLMQMDRFMIFQASRFPGEAERVAFLVSRLTGEAEKWAIPHMQPDSPLRNNYQGFLAELRRTYKSPLRHSRRAQIRKTSASNRAVRERERERQMLCRQLAAAGTGSCPVHPASNGTNPAPALPSRGRNL.

Over residues 1 to 12 the composition is skewed to polar residues; that stretch reads MVQPRTSKTESP. Residues 1–22 form a disordered region; the sequence is MVQPRTSKTESPASAPGASAQM. Residues 29-69 are a coiled coil; the sequence is LTSLRLTNSALRREASTLRAEKANLTNMLESVMAELTLLRT. 2 disordered regions span residues 84-105 and 218-243; these read SAITSNGTRPMTTPPTSLPEPF and TGSCPVHPASNGTNPAPALPSRGRNL. Residues 85-94 show a composition bias toward polar residues; sequence AITSNGTRPM.

Belongs to the LDOC1 family. As to expression, widely expressed.

This chain is Retrotransposon Gag-like protein 6, found in Mus musculus (Mouse).